The sequence spans 505 residues: Phosphoglycerate kinase, glycosomal (505 aa).

Positions 29, 30, 31, 32, 45, 67, 68, 70, 71, 219, 220, 256, and 257 each coordinate (2R)-3-phosphoglycerate. Positions 302 and 303 each coordinate ADP. CDP is bound at residue G302. A303 and K304 together coordinate AMP. A303 contributes to the ATP binding site. A303 contacts Mg(2+). K304 provides a ligand contact to (2R)-3-phosphoglycerate. D307 is a binding site for CDP. Residue D307 coordinates Mg(2+). Residues K308 and G326 each coordinate ADP. K308 contacts AMP. K308 lines the ATP pocket. G326 serves as a coordination point for CDP. 2 residues coordinate AMP: G327 and G399. G327 and G399 together coordinate ATP. Residues G399 and N423 each coordinate ADP. Residues G424, L426, and F429 each contribute to the CDP site. ADP contacts are provided by F429, E430, D462, and T463. E430 contributes to the AMP binding site. 3 residues coordinate ATP: E430, D462, and T463. Residue D462 participates in Mg(2+) binding.

The protein belongs to the phosphoglycerate kinase family. Monomer. It depends on Mg(2+) as a cofactor.

The protein localises to the glycosome. The enzyme catalyses (2R)-3-phosphoglycerate + ATP = (2R)-3-phospho-glyceroyl phosphate + ADP. It participates in carbohydrate degradation; glycolysis; pyruvate from D-glyceraldehyde 3-phosphate: step 2/5. The sequence is that of Phosphoglycerate kinase, glycosomal (PGKA) from Crithidia fasciculata.